Reading from the N-terminus, the 470-residue chain is Nuclear receptor subfamily 0 group B member 1 (470 aa).

A run of 3 repeats spans residues 1–67 (MAGE…YRCC), 68–133 (FCGK…YRCC), and 134–200 (FCGE…YRCC). Positions 1–253 (MAGEDHQWQG…RPVALKNPQV (253 aa)) are 4 X 67 AA tandem repeats. Short sequence motifs (LXXLL motif) lie at residues 13–17 (LYNML), 80–84 (LYSML), and 146–150 (LYSLL). The 4; truncated repeat unit spans residues 201-253 (FCGEDQPQQGSTLYSMPTSTNQTPAAPEERPGAPWWDTSCGALRPVALKNPQV). Residues 205 to 469 (DQPQQGSTLY…DMMLEMLCTK (265 aa)) form the NR LBD domain. The AF-2 motif motif lies at 461–466 (MMLEML).

The protein belongs to the nuclear hormone receptor family. NR0 subfamily. Homodimer. Interacts with NR5A1, NR5A2, NR0B2 and with COPS2. Interacts with ESRRB; represses ESRRB activity at the GATA6 promoter.

It localises to the nucleus. The protein localises to the cytoplasm. Functionally, nuclear receptor that lacks a DNA-binding domain and acts as a corepressor that inhibits the transcriptional activity of other nuclear receptors through heterodimeric interactions. Component of a cascade required for the development of the hypothalamic-pituitary-adrenal-gonadal axis. May also have a role in the development of the embryo and in the maintenance of embryonic stem cell pluripotency. The sequence is that of Nuclear receptor subfamily 0 group B member 1 (NR0B1) from Callithrix jacchus (White-tufted-ear marmoset).